The primary structure comprises 269 residues: Major capsid protein P2 (269 aa).

Homotrimer.

The protein resides in the virion. Functionally, major capsid protein. The polypeptide is Major capsid protein P2 (II) (Pseudoalteromonas phage PM2 (Bacteriophage PM2)).